A 135-amino-acid chain; its full sequence is Large ribosomal subunit protein uL16c (135 aa).

The segment covering 1–23 (MLSPKKTKFRKEHRGRMKGRSSR) has biased composition (basic residues). Positions 1–24 (MLSPKKTKFRKEHRGRMKGRSSRG) are disordered.

This sequence belongs to the universal ribosomal protein uL16 family. In terms of assembly, part of the 50S ribosomal subunit.

It is found in the plastid. It localises to the chloroplast. The chain is Large ribosomal subunit protein uL16c from Pelargonium hortorum (Common geranium).